A 189-amino-acid polypeptide reads, in one-letter code: Peptidyl-tRNA hydrolase (189 aa).

Residue tyrosine 14 participates in tRNA binding. Histidine 19 functions as the Proton acceptor in the catalytic mechanism. TRNA-binding residues include tyrosine 64, asparagine 66, and asparagine 112.

It belongs to the PTH family. Monomer.

Its subcellular location is the cytoplasm. The enzyme catalyses an N-acyl-L-alpha-aminoacyl-tRNA + H2O = an N-acyl-L-amino acid + a tRNA + H(+). Hydrolyzes ribosome-free peptidyl-tRNAs (with 1 or more amino acids incorporated), which drop off the ribosome during protein synthesis, or as a result of ribosome stalling. Functionally, catalyzes the release of premature peptidyl moieties from peptidyl-tRNA molecules trapped in stalled 50S ribosomal subunits, and thus maintains levels of free tRNAs and 50S ribosomes. The polypeptide is Peptidyl-tRNA hydrolase (Clostridium botulinum (strain ATCC 19397 / Type A)).